Here is a 515-residue protein sequence, read N- to C-terminus: Synaptic vesicular amine transporter (515 aa).

Topologically, residues 1 to 20 (MALSDLVLLRWLRDSRHSRK) are cytoplasmic. The helical transmembrane segment at 21-41 (LILFIVFLALLLDNMLLTVVV) threads the bilayer. At 42–130 (PIIPSYLYSI…EDRDLLNENV (89 aa)) the chain is on the lumenal, vesicle side. N-linked (GlcNAc...) asparagine glycans are attached at residues asparagine 56, asparagine 80, asparagine 81, asparagine 89, and asparagine 111. Cysteines 118 and 325 form a disulfide. Residues 131 to 151 (QVGLLFASKATVQLLTNPFIG) traverse the membrane as a helical segment. Residues 152–160 (LLTNRIGYP) lie on the Cytoplasmic side of the membrane. A helical transmembrane segment spans residues 161–181 (IPMFAGFCIMFISTVMFAFSS). The Lumenal, vesicle segment spans residues 182–190 (SYAFLLIAR). The helical transmembrane segment at 191–211 (SLQGIGSSCSSVAGMGMLASV) threads the bilayer. Topologically, residues 212–220 (YTDDEERGK) are cytoplasmic. A helical transmembrane segment spans residues 221-243 (PMGIALGGLAMGVLVGPPFGSVL). Serotonin-binding residues include leucine 229 and valine 233. Over 244-249 (YEFVGK) the chain is Lumenal, vesicle. A helical membrane pass occupies residues 250 to 272 (TAPFLVLAALVLLDGAIQLFVLQ). The Cytoplasmic portion of the chain corresponds to 273–292 (PSRVQPESQKGTPLTTLLKD). Residues 293–312 (PYILIAAGSICFANMGIAML) traverse the membrane as a helical segment. Serotonin-binding residues include asparagine 306, isoleucine 309, glutamate 313, phenylalanine 335, and tyrosine 342. The Lumenal, vesicle portion of the chain corresponds to 313–329 (EPALPIWMMETMCSRKW). A helical membrane pass occupies residues 330 to 353 (QLGVAFLPASISYLIGTNIFGILA). Topologically, residues 354–358 (HKMGR) are cytoplasmic. A helical membrane pass occupies residues 359–379 (WLCALLGMVIVGISILCIPFA). Residues 380 to 390 (KNIYGLIAPNF) are Lumenal, vesicle-facing. Residues 391 to 411 (GVGFAIGMVDSSMMPIMGYLV) form a helical membrane-spanning segment. Aspartate 400 is a binding site for serotonin. Topologically, residues 412-415 (DLRH) are cytoplasmic. The helical transmembrane segment at 416-436 (VSVYGSVYAIADVAFCMGYAI) threads the bilayer. Tyrosine 434 contributes to the serotonin binding site. Over 437-441 (GPSAG) the chain is Lumenal, vesicle. The helical transmembrane segment at 442–463 (GAIAKAIGFPWLMTIIGIIDIA) threads the bilayer. Topologically, residues 464–515 (FAPLCFFLRSPPAKEEKMAILMDHNCPIKRKMYTQNNVQSYPIGDDEESESD) are cytoplasmic. Residues serine 512 and serine 514 each carry the phosphoserine; by CK2 modification.

Belongs to the major facilitator superfamily. Vesicular transporter family. In terms of assembly, interacts with SLC6A3. Expressed in the substantia nigra and the tuberomammillary nucleus of the posterior hypothalamus. Expressed in stomach, in particular in varicose nerve fibers and enterochromaffin-like cells in the corpus region (at protein level).

It is found in the cytoplasmic vesicle. It localises to the secretory vesicle. The protein resides in the synaptic vesicle membrane. Its subcellular location is the secretory vesicle membrane. The protein localises to the cell projection. It is found in the axon. It localises to the dendrite. The enzyme catalyses serotonin(in) + 2 H(+)(out) = serotonin(out) + 2 H(+)(in). It catalyses the reaction dopamine(in) + 2 H(+)(out) = dopamine(out) + 2 H(+)(in). It carries out the reaction histamine(in) + 2 H(+)(out) = histamine(out) + 2 H(+)(in). Its activity is regulated as follows. Strongly inhibited by reserpine and tetrabenazine. Also inhibited to a lesser extent by ketanserin and fenfluramine. Reserpine and ketanserin inhibit by blocking the substrate-binding pocket. Tetrabenazine traps SLC18A2/VMAT2 in an occluded conformation and its inhibition is specific to SLC18A2/VMAT2 but not SLC18A1/VMAT1. Its function is as follows. Electrogenic antiporter that exchanges one cationic monoamine with two intravesicular protons across the membrane of secretory and synaptic vesicles. Uses the electrochemical proton gradient established by the V-type proton-pump ATPase to accumulate high concentrations of monoamines inside the vesicles prior to their release via exocytosis. Transports a variety of catecholamines such as dopamine, adrenaline and noradrenaline, histamine, and indolamines such as serotonin. Regulates the transvesicular monoaminergic gradient that determines the quantal size. Mediates somatodendritic dopamine release in hippocampal neurons, likely as part of a regulated secretory pathway that integrates retrograde synaptic signals. Acts as a primary transporter for striatal dopamine loading ensuring impulse-dependent release of dopamine at the synaptic cleft. Responsible for histamine and serotonin storage and subsequent corelease from mast cell granules. This Rattus norvegicus (Rat) protein is Synaptic vesicular amine transporter (Slc18a2).